The primary structure comprises 642 residues: Cylicin-1 (642 aa).

2 disordered regions span residues 167 to 203 (NGEP…NLEY) and 284 to 607 (NCSQ…CEPF). The segment covering 191-203 (KTSNSTSETNLEY) has biased composition (polar residues). Repeat copies occupy residues 294–313 (LKTG…GSKD), 314–344 (AKKE…DSKD), 345–391 (GKKK…KKST), 392–432 (GSTG…SSKK), 433–464 (SKKD…SEGD), 465–500 (STGK…SDLG), 501–526 (VNKK…SKAG), and 527–543 (RRKN…DSSG). A compositionally biased stretch (basic and acidic residues) spans 298–316 (GKKERDSDIDSGGSKDAKK). A compositionally biased stretch (basic residues) spans 317-330 (EGKKKGKRESRKKR). Positions 353-364 (KKNEIKKKKDTD) are enriched in basic and acidic residues. The segment covering 388-404 (KKSTGSTGSESVDSKST) has biased composition (low complexity). Positions 405–416 (NKVKKQVKKGVM) are enriched in basic residues. Over residues 428-440 (ASSKKSKKDEKKE) the composition is skewed to basic and acidic residues. The span at 454–463 (STDADSESEG) shows a compositional bias: acidic residues. The segment covering 465-488 (STGKKNEKKDKKITKKGEKKDAKK) has biased composition (basic and acidic residues). Positions 513 to 523 (SFSDSTSDSYS) are enriched in low complexity. Residues 527–543 (RRKNVRRSDSESEDSSG) form an 8 X approximate tandem repeats region.

In terms of assembly, interacts with proteins of spermatozoa head including ACTL7A, CCIN, FAM209 and SPACA1; the interactions may be necessary for proper acrosome attachment to the nuclear envelope. In terms of tissue distribution, testis.

The protein localises to the cytoplasm. The protein resides in the cytoskeleton. Its subcellular location is the perinuclear theca. It localises to the calyx. Plays a role in the establishment of normal sperm morphology during spermatogenesis and is required for acrosome attachment to the nuclear envelope. The sequence is that of Cylicin-1 from Mus musculus (Mouse).